A 91-amino-acid chain; its full sequence is Small ribosomal subunit protein bS18 (91 aa).

Residues Met1–Thr14 show a composition bias toward low complexity. The interval Met1 to Lys24 is disordered.

The protein belongs to the bacterial ribosomal protein bS18 family. Part of the 30S ribosomal subunit. Forms a tight heterodimer with protein bS6.

In terms of biological role, binds as a heterodimer with protein bS6 to the central domain of the 16S rRNA, where it helps stabilize the platform of the 30S subunit. The polypeptide is Small ribosomal subunit protein bS18 (Caldicellulosiruptor saccharolyticus (strain ATCC 43494 / DSM 8903 / Tp8T 6331)).